The sequence spans 98 residues: PsbF-like protein (98 aa).

The next 2 helical transmembrane spans lie at 5–25 (VLLV…WLGK) and 73–93 (TAAV…ILAM).

The protein belongs to the PsbE/PsbF family.

It localises to the membrane. Unknown. Resembles PsbF, one of the subunits of the photosystem II reaction center. However, it encodes asparagine rather than histidine at the site PsbF uses to bind heme. This Prochlorococcus marinus (strain MIT 9312) protein is PsbF-like protein.